Reading from the N-terminus, the 129-residue chain is Glycine cleavage system H protein (129 aa).

Residues 24-106 (HAVVGITDFA…YDGGWLFKLA (83 aa)) enclose the Lipoyl-binding domain. Lys65 carries the post-translational modification N6-lipoyllysine.

The protein belongs to the GcvH family. The glycine cleavage system is composed of four proteins: P, T, L and H. (R)-lipoate serves as cofactor.

The glycine cleavage system catalyzes the degradation of glycine. The H protein shuttles the methylamine group of glycine from the P protein to the T protein. This Hydrogenovibrio crunogenus (strain DSM 25203 / XCL-2) (Thiomicrospira crunogena) protein is Glycine cleavage system H protein.